Reading from the N-terminus, the 202-residue chain is MMIIVMLLLSYLIGAFPSGFVIGKLFFKKDIRQFGSGNTGATNSFRVLGRPAGFLVTFLDIFKGFITVFFPLWLPVHADGPISTFFTNGLIVGLFAILGHVYPVYLKFQGGKAVATSAGVVLGVNPILLLILAIIFFIILKIFKYVSLASIVAAICCVIGSLIIQDYILLVVSFLVSIILIIRHRSNIARIFRGEEPKIKWM.

The next 6 helical transmembrane spans lie at 2–22, 54–74, 85–105, 120–140, 141–161, and 162–182; these read MIIV…GFVI, FLVT…PLWL, FFTN…YPVY, VVLG…FIIL, KIFK…VIGS, and LIIQ…ILII.

Belongs to the PlsY family. As to quaternary structure, probably interacts with PlsX.

It localises to the cell membrane. The enzyme catalyses an acyl phosphate + sn-glycerol 3-phosphate = a 1-acyl-sn-glycero-3-phosphate + phosphate. It functions in the pathway lipid metabolism; phospholipid metabolism. Its function is as follows. Catalyzes the transfer of an acyl group from acyl-phosphate (acyl-PO(4)) to glycerol-3-phosphate (G3P) to form lysophosphatidic acid (LPA). This enzyme utilizes acyl-phosphate as fatty acyl donor, but not acyl-CoA or acyl-ACP. The protein is Glycerol-3-phosphate acyltransferase of Staphylococcus aureus (strain bovine RF122 / ET3-1).